Reading from the N-terminus, the 117-residue chain is Ig heavy chain V region MOO (117 aa).

The Ig-like domain maps to 1-116 (EVKLVESGGD…FGQGTIVTVS (116 aa)).

This is Ig heavy chain V region MOO from Canis lupus familiaris (Dog).